The following is a 241-amino-acid chain: Neuromodulin (241 aa).

Residues 1–26 (TKQVEKNEDGDQKIEQDGIKPEDKAH) show a composition bias toward basic and acidic residues. A disordered region spans residues 1 to 241 (TKQVEKNEDG…EESKADQENA (241 aa)). In terms of domain architecture, IQ spans 25–54 (AHKAATKIQASFRGHITRKKLKGEKKGDAP). Low complexity-rich tracts occupy residues 80-95 (APAATEAAAADSAQQE) and 118-131 (SEQPAPQAATPAAS). Composition is skewed to basic and acidic residues over residues 132 to 147 (SEEKTAAAAAPEREST) and 159 to 171 (KADEAQDKEEPKQ). A compositionally biased stretch (low complexity) spans 172–198 (ADVPAADTTATTTPAAEDATAKATAQP). Composition is skewed to basic and acidic residues over residues 208-220 (TEEKTDAVEETKP) and 232-241 (EESKADQENA).

It belongs to the neuromodulin family. As to quaternary structure, binds calmodulin with a greater affinity in the absence of Ca(2+) than in its presence. In terms of processing, palmitoylated. Palmitoylation is essential for plasma membrane association.

It is found in the cell membrane. The protein resides in the cell projection. It localises to the growth cone membrane. Its subcellular location is the synapse. The protein localises to the filopodium membrane. Functionally, this protein is associated with nerve growth. It is a major component of the motile 'growth cones' that form the tips of elongating axons. Plays a role in axonal and dendritic filopodia induction. The polypeptide is Neuromodulin (GAP43) (Serinus canaria (Island canary)).